A 108-amino-acid polypeptide reads, in one-letter code: MILRSLLYFVMAGLCEIGGGYLVWLWIREGKSVWLALVRAILLTVYGFVATLQPANFGRAYAAYGGIFIILSIIWGWQVDNVVVDRLDWLGAAIALVGVLVMMYANRA.

A run of 4 helical transmembrane segments spans residues 7 to 27 (LYFV…WLWI), 32 to 52 (SVWL…VATL), 64 to 84 (YGGI…NVVV), and 86 to 106 (RLDW…MYAN).

The protein belongs to the UPF0060 family.

It localises to the cell inner membrane. The protein is UPF0060 membrane protein sll0793 of Synechocystis sp. (strain ATCC 27184 / PCC 6803 / Kazusa).